Reading from the N-terminus, the 185-residue chain is Protein C2-DOMAIN ABA-RELATED 9 (185 aa).

One can recognise a C2 domain in the interval 1–104 (MEDKPLGILR…LEAHQMELDF (104 aa)). Ca(2+)-binding residues include Arg22, Asp23, Asp28, Asp74, Lys75, Asp76, and Asp82.

This sequence belongs to the plant CAR protein family. As to quaternary structure, binds to PYR/PYL/RCAR abscisic acid intracellular receptors in an ABA-independent manner, both at the plasma membrane and in the nucleus. Interacts with LOT1 in the nuleus; this interaction is repressed by abscisic acid (ABA) and is sensitive to calcium ion Ca(2+), leading to free CAR9 accumulation at the plasma membrane. It depends on Ca(2+) as a cofactor.

It localises to the cell membrane. It is found in the nucleus. Functionally, stimulates the GTPase/ATPase activities of Obg-like ATPases. Mediates the transient calcium-dependent interaction of PYR/PYL/RCAR abscisic acid (ABA) receptors with the plasma membrane and thus regulates ABA sensitivity. This is Protein C2-DOMAIN ABA-RELATED 9 from Arabidopsis thaliana (Mouse-ear cress).